Here is a 243-residue protein sequence, read N- to C-terminus: Leucinostatins biosynthesis cluster protein S (243 aa).

Part of the gene cluster that mediates the biosynthesis of the lipopeptide antibiotics leucinostatins that show extensive biological activities, including antimalarial, antiviral, antibacterial, antifungal, and antitumor activities, as well as phytotoxic. The function of lcsS within the leucinostatins biosynthesis has not been identified yet. The sequence is that of Leucinostatins biosynthesis cluster protein S from Purpureocillium lilacinum (Paecilomyces lilacinus).